A 444-amino-acid polypeptide reads, in one-letter code: MIPLNTTDYANALGLKAKQASALMARAPTATKNAALRKLAGLLRANVNALQIDNARDIERAVQSGLAAPMVDRLKLSPQVIETCAQGCEQLAGMADVIGEIIGMKQQPSGIRVGQMRVPIGVFGMIFESRPNVTIEAASLSIKSGNACILRGGSEAIESNKALARLVQQALTESGLPAEAVQLVQTTDRAVVGQLITMPQYVDVIIPRGGKGLIERISRDAKVPVIKHLDGNCHTYVDDPCDIAMAVKVADNAKTNKYSPCNATESLLVARAVAAEFLPSIGRVYAAKGVEMRCDPQALAIFKENQPVAPVNIGHDAIDSAVELKPVLVLAQESDWFEEYLAPIISIKVVAGVDEAIAHINRYSSHHTDAILTRDHMHAQQFLREVDSASVMVNTSTRFADGFEYGLGAEIGISTDKFHARGPVGIEGLTSLKYVVLGDGEIRA.

Belongs to the gamma-glutamyl phosphate reductase family.

The protein resides in the cytoplasm. It catalyses the reaction L-glutamate 5-semialdehyde + phosphate + NADP(+) = L-glutamyl 5-phosphate + NADPH + H(+). Its pathway is amino-acid biosynthesis; L-proline biosynthesis; L-glutamate 5-semialdehyde from L-glutamate: step 2/2. In terms of biological role, catalyzes the NADPH-dependent reduction of L-glutamate 5-phosphate into L-glutamate 5-semialdehyde and phosphate. The product spontaneously undergoes cyclization to form 1-pyrroline-5-carboxylate. In Albidiferax ferrireducens (strain ATCC BAA-621 / DSM 15236 / T118) (Rhodoferax ferrireducens), this protein is Gamma-glutamyl phosphate reductase.